Consider the following 349-residue polypeptide: Trans-enoyl reductase phmE (349 aa).

55-58 (CDWK) is a binding site for NADP(+). Position 143-150 (143-150 (TGIGTMGL)) interacts with substrate. Residues 182–185 (SPKN), Tyr200, and 247–248 (LE) each bind NADP(+). Residue 267–271 (GMAIL) participates in substrate binding. 336–337 (VS) is an NADP(+) binding site.

This sequence belongs to the zinc-containing alcohol dehydrogenase family. In terms of assembly, monomer.

It functions in the pathway mycotoxin biosynthesis. Trans-enoyl reductase; part of the gene cluster that mediates the biosynthesis of the mycotoxins phomacins, leucine-derived cytochalasans with potent actin polymerization-inhibitory activities and monocot-specific antigerminative activities. The first step in the pathway is catalyzed by the hybrid PKS-NRPS phmA, assisted by the enoyl reductase phmE, that are responsible for fusion of the leucine precursor and the polyketide backbone to produce a 2-pyrrolidone intermediate. The polyketide synthase module (PKS) of phmA is responsible for the synthesis of the polyketide backbone and the downstream nonribosomal peptide synthetase (NRPS) amidates the carboxyl end of the polyketide with the leucine precursor. Because phmA lacks a designated enoylreductase (ER) domain, the required activity is provided the enoyl reductase phmE. Reduction by the hydrolyase phmG, followed by dehydration and intra-molecular Diels-Alder cyclization by the Diels-Alderase phmD then yield the required isoindolone-fused macrocycle. A number of oxidative steps catalyzed by the tailoring cytochrome P450 monooxygenase phmB, the FAD-linked oxidoreductase phmC and the short-chain dehydrogenase/reductase phmF, are further required to afford the final products, phomacin D and phomacin E. This is Trans-enoyl reductase phmE from Phaeosphaeria nodorum (strain SN15 / ATCC MYA-4574 / FGSC 10173) (Glume blotch fungus).